A 330-amino-acid polypeptide reads, in one-letter code: Solute carrier family 25 member 16 (330 aa).

Solcar repeat units follow at residues 32-118, 126-214, and 236-326; these read FYWL…YKTL, SGHV…LKSV, and LKTH…MKQF. 6 consecutive transmembrane segments (helical) span residues 33 to 52, 95 to 112, 132 to 149, 189 to 209, 242 to 262, and 297 to 317; these read YWLRSFLAGGIAGCCAKTTV, GAMMIRIFPYGAIQFMAF, LMAGSMAGMTAVICTYPL, GLMPTILGMAPYAGVSFFTFG, LLCGGVAGAIAQTISYPFDVT, and GLYRGLSLNYIRCVPSQAVAF.

It belongs to the mitochondrial carrier (TC 2.A.29) family. In terms of tissue distribution, mostly in thyroid, liver, lung, kidney and to a lesser extent in heart and skeletal muscle.

The protein localises to the mitochondrion inner membrane. May be involved in the transport of coenzyme A in the mitochondrial matrix. Very little is known about the physiological function of this carrier. In Bos taurus (Bovine), this protein is Solute carrier family 25 member 16 (SLC25A16).